A 953-amino-acid polypeptide reads, in one-letter code: Nucleotide-binding oligomerization domain-containing protein 1 (953 aa).

A CARD domain is found at 15-105 (ESHPHIQLLK…AYVDLRPWLL (91 aa)). An NACHT domain is found at 196-531 (ETIFILGDAG…AFFTAFFLVL (336 aa)). An ATP-binding site is contributed by 202–209 (GDAGVGKS). Residues Cys-558 and Cys-567 are each lipidated (S-palmitoyl cysteine). LRR repeat units follow at residues 632–656 (LKSL…IWML), 702–725 (FPKR…ELQP), 727–750 (FSRL…VLSE), 755–778 (YKIV…YVTK), 783–806 (CKGL…YLAL), 839–862 (HPSL…SLAR), 867–891 (NTSL…LAEM), 895–918 (NQTL…QLAD), and 923–946 (NTGI…VYED). Residue Cys-952 is the site of S-palmitoyl cysteine attachment.

It belongs to the NOD1-NOD2 family. In terms of assembly, homooligomer: homooligomerizes following ligand-binding, promoting RIPK2 recruitment. Interacts (via CARD domain) with RIPK2 (via CARD domain). Following RIPK2 recruitment, RIPK2 homooligomerizes via its CARD domain and forms long filaments named RIPosomes. Interacts with ARHGEF2. Interacts (via CARD domain) with ubiquitin; inhibiting interaction with RIPK2. Interacts with NLRP10 and recruits it to the cell membrane following invasive bacterial infection. Interacts with IFIH1; this interaction promotes transcription of antiviral genes and inhibition of viral replication. Interacts with IRGM; promoting NOD1 degradation. Interacts with ATG16L1. Post-translationally, palmitoylated. Palmitoylation is required for proper recruitment to the bacterial entry site and hence for proper signaling upon cognate peptidoglycan detection. In terms of processing, ubiquitinated. 'Lys-48'-linked polyubiquitination by RNF34 promotes proteasomal degradation and thereby negatively regulates NOD1 for instance in NF-kappa-B activation. Degraded via selective autophagy following interaction with IRGM. IRGM promotes NOD1-RIPK2 RIPosome recruitment to autophagosome membranes, promoting their SQSTM1/p62-dependent autophagic degradation. Highly expressed in adult heart, skeletal muscle, pancreas, spleen and ovary. Also detected in placenta, lung, liver, kidney, thymus, testis, small intestine and colon.

It is found in the cell membrane. The protein resides in the apical cell membrane. Its subcellular location is the basolateral cell membrane. It localises to the cytoplasm. Functionally, pattern recognition receptor (PRR) that detects bacterial peptidoglycan fragments and other danger signals and thus participates in both innate and adaptive immune responses. Specifically recognizes and binds gamma-D-glutamyl-meso-diaminopimelic acid (iE-DAP), a dipeptide present in peptidoglycan of Gram-negative bacteria. Preferentially binds iE-DAP in tripeptide-containing muropeptides (MurNAc-TriDAP or TriDAP). Ligand binding triggers oligomerization that facilitates the binding and subsequent activation of the proximal adapter receptor-interacting RIPK2. Following recruitment, RIPK2 undergoes 'Met-1'- (linear) and 'Lys-63'-linked polyubiquitination by E3 ubiquitin-protein ligases XIAP, BIRC2, BIRC3 and the LUBAC complex, becoming a scaffolding protein for downstream effectors, triggering activation of the NF-kappa-B and MAP kinases signaling. This in turn leads to the transcriptional activation of hundreds of genes involved in immune response. Also acts as a regulator of antiviral response elicited by dsRNA and the expression of RLR pathway members by targeting IFIH1 and TRAF3 to modulate the formation of IFIH1-MAVS and TRAF3-MAVS complexes leading to increased transcription of type I IFNs. Also acts as a regulator of autophagy via its interaction with ATG16L1, possibly by recruiting ATG16L1 at the site of bacterial entry. Besides recognizing pathogens, also involved in the endoplasmic reticulum stress response: acts by sensing and binding to the cytosolic metabolite sphingosine-1-phosphate generated in response to endoplasmic reticulum stress, initiating an inflammation process that leads to activation of the NF-kappa-B and MAP kinases signaling. In addition, plays a role in insulin trafficking in beta cells in a cell-autonomous manner. Mechanistically, upon recognizing cognate ligands, NOD1 and RIPK2 localize to insulin vesicles where they recruit RAB1A to direct insulin trafficking through the cytoplasm. In contrast to isoform 1, does not efficiently recognize and bind gamma-D-glutamyl-meso-diaminopimelic acid (iE-DAP) ligand. This is Nucleotide-binding oligomerization domain-containing protein 1 from Homo sapiens (Human).